Consider the following 155-residue polypeptide: Microsomal glutathione S-transferase 1 (155 aa).

Residues 3-9 (DLRQLMD) are Lumenal-facing. A helical membrane pass occupies residues 10-33 (NEVLMAFTSYATIILTKMMFMSSA). Topologically, residues 34–62 (TAFQRITNKVFANPEDCAGFGKGENAKKF) are cytoplasmic. R38 contacts glutathione. K42, K55, and K60 each carry N6-acetyllysine. A helical membrane pass occupies residues 63–96 (VRTDEKVERVRRAHLNDLENIVPFLGIGLLYSLS). R73, R74, H76, and E81 together coordinate glutathione. Residues 97–99 (GPD) lie on the Lumenal side of the membrane. The helical transmembrane segment at 100-123 (LSTALMHFRIFVGARIYHTIAYLT) threads the bilayer. Position 121 (Y121) interacts with glutathione. Residues 124 to 128 (PLPQP) lie on the Cytoplasmic side of the membrane. The helical transmembrane segment at 129–148 (NRGLAFFVGYGVTLSMAYRL) threads the bilayer. The Lumenal portion of the chain corresponds to 149–155 (LRSRLYL).

Belongs to the MAPEG family. Homotrimer; The trimer binds only one molecule of glutathione. Post-translationally, acetylation of Lys-42 and Lys-55 is observed in liver mitochondria from fasted mice but not from fed mice. As to expression, expressed in the testes (at protein level).

It is found in the endoplasmic reticulum membrane. The protein resides in the mitochondrion outer membrane. It catalyses the reaction RX + glutathione = an S-substituted glutathione + a halide anion + H(+). Conjugation of reduced glutathione to a wide number of exogenous and endogenous hydrophobic electrophiles. The sequence is that of Microsomal glutathione S-transferase 1 (Mgst1) from Mus musculus (Mouse).